The following is a 196-amino-acid chain: Large ribosomal subunit protein uL18 (196 aa).

This sequence belongs to the universal ribosomal protein uL18 family. As to quaternary structure, part of the 50S ribosomal subunit. Contacts the 5S and 23S rRNAs.

Its function is as follows. This is one of the proteins that bind and probably mediate the attachment of the 5S RNA into the large ribosomal subunit, where it forms part of the central protuberance. The sequence is that of Large ribosomal subunit protein uL18 from Saccharolobus islandicus (strain L.S.2.15 / Lassen #1) (Sulfolobus islandicus).